We begin with the raw amino-acid sequence, 511 residues long: Glucans biosynthesis protein G (511 aa).

The signal sequence occupies residues 1–22 (MMKMRWLSAAVMLTLYTSSSWA).

The protein belongs to the OpgD/OpgG family.

It localises to the periplasm. It functions in the pathway glycan metabolism; osmoregulated periplasmic glucan (OPG) biosynthesis. In terms of biological role, involved in the biosynthesis of osmoregulated periplasmic glucans (OPGs). In Shigella boydii serotype 4 (strain Sb227), this protein is Glucans biosynthesis protein G.